The chain runs to 97 residues: Putative membrane protein insertion efficiency factor (97 aa).

This sequence belongs to the UPF0161 family.

The protein resides in the cell inner membrane. Could be involved in insertion of integral membrane proteins into the membrane. This Chlamydia muridarum (strain MoPn / Nigg) protein is Putative membrane protein insertion efficiency factor.